The primary structure comprises 194 residues: MQIALLLLIAYLLGAIPTGLIVGKLFFNKDIRKFGSGNLGATNTFRVLGKKAGIFVTIFDVAKGVLPAIFPIIYDLDIHGIWFGLAAIIGHVYPIYLNFKGGKAVATSAGVILGVNPVVFLIIAVIFFTLLFTTRMVSLTSILTSIGNFITTLFFDDIILQIISFLIMLLIIIRHSSNIKRIISGTEPKIQFKK.

The next 5 helical transmembrane spans lie at I3–G23, V47–P67, I78–L97, I112–F132, and L153–I173.

It belongs to the PlsY family. Probably interacts with PlsX.

The protein localises to the cell membrane. It carries out the reaction an acyl phosphate + sn-glycerol 3-phosphate = a 1-acyl-sn-glycero-3-phosphate + phosphate. It participates in lipid metabolism; phospholipid metabolism. Its function is as follows. Catalyzes the transfer of an acyl group from acyl-phosphate (acyl-PO(4)) to glycerol-3-phosphate (G3P) to form lysophosphatidic acid (LPA). This enzyme utilizes acyl-phosphate as fatty acyl donor, but not acyl-CoA or acyl-ACP. The protein is Glycerol-3-phosphate acyltransferase of Macrococcus caseolyticus (strain JCSC5402) (Macrococcoides caseolyticum).